A 439-amino-acid polypeptide reads, in one-letter code: Ribosomal protein uS12 methylthiotransferase RimO (439 aa).

The 117-residue stretch at 1 to 117 (MNIGFISLGC…IAGVVNRIAQ (117 aa)) folds into the MTTase N-terminal domain. 6 residues coordinate [4Fe-4S] cluster: cysteine 10, cysteine 46, cysteine 80, cysteine 154, cysteine 158, and cysteine 161. The 231-residue stretch at 140–370 (TTPPGSAYLK…LRLQQKITRQ (231 aa)) folds into the Radical SAM core domain. Residues 373 to 439 (LARINTQEKV…RNYDMIGEYQ (67 aa)) form the TRAM domain.

It belongs to the methylthiotransferase family. RimO subfamily. The cofactor is [4Fe-4S] cluster.

The protein localises to the cytoplasm. The catalysed reaction is L-aspartate(89)-[ribosomal protein uS12]-hydrogen + (sulfur carrier)-SH + AH2 + 2 S-adenosyl-L-methionine = 3-methylsulfanyl-L-aspartate(89)-[ribosomal protein uS12]-hydrogen + (sulfur carrier)-H + 5'-deoxyadenosine + L-methionine + A + S-adenosyl-L-homocysteine + 2 H(+). Catalyzes the methylthiolation of an aspartic acid residue of ribosomal protein uS12. The sequence is that of Ribosomal protein uS12 methylthiotransferase RimO from Syntrophomonas wolfei subsp. wolfei (strain DSM 2245B / Goettingen).